We begin with the raw amino-acid sequence, 311 residues long: p-hydroxybenzoic acid efflux pump subunit AaeA (311 aa).

The helical transmembrane segment at 11 to 31 (VGITVLVVVLAVIAIFNVWAF) threads the bilayer.

This sequence belongs to the membrane fusion protein (MFP) (TC 8.A.1) family.

The protein localises to the cell inner membrane. Functionally, forms an efflux pump with AaeB. The protein is p-hydroxybenzoic acid efflux pump subunit AaeA of Yersinia pestis bv. Antiqua (strain Antiqua).